Reading from the N-terminus, the 237-residue chain is 2,3,4,5-tetrahydropyridine-2,6-dicarboxylate N-acetyltransferase (237 aa).

It belongs to the transferase hexapeptide repeat family. DapH subfamily.

The catalysed reaction is (S)-2,3,4,5-tetrahydrodipicolinate + acetyl-CoA + H2O = L-2-acetamido-6-oxoheptanedioate + CoA. It functions in the pathway amino-acid biosynthesis; L-lysine biosynthesis via DAP pathway; LL-2,6-diaminopimelate from (S)-tetrahydrodipicolinate (acetylase route): step 1/3. In terms of biological role, catalyzes the transfer of an acetyl group from acetyl-CoA to tetrahydrodipicolinate. In Limosilactobacillus fermentum (strain NBRC 3956 / LMG 18251) (Lactobacillus fermentum), this protein is 2,3,4,5-tetrahydropyridine-2,6-dicarboxylate N-acetyltransferase.